A 276-amino-acid polypeptide reads, in one-letter code: Secreted RxLR effector protein 150 (276 aa).

A signal peptide spans 1–18 (MRNIAFLIGLFFIGYSSC). The short motif at 49-64 (RTLQADDRERILAEER) is the RxLR-dEER element.

It belongs to the RxLR effector family.

The protein resides in the secreted. It is found in the host nucleus. The protein localises to the host cytoplasm. In terms of biological role, secreted effector that partially suppresses the host cell death induced by cell death-inducing proteins. This is Secreted RxLR effector protein 150 from Plasmopara viticola (Downy mildew of grapevine).